The chain runs to 127 residues: Photosystem II reaction center Psb28 protein (127 aa).

A disordered region spans residues 107–127; sequence GLGYSQNQNSDQTDGDANAEA. Residues 109–118 show a composition bias toward polar residues; sequence GYSQNQNSDQ.

This sequence belongs to the Psb28 family. As to quaternary structure, part of the photosystem II complex.

Its subcellular location is the cellular thylakoid membrane. This chain is Photosystem II reaction center Psb28 protein, found in Parasynechococcus marenigrum (strain WH8102).